Here is a 476-residue protein sequence, read N- to C-terminus: Nyctalopin (476 aa).

Positions Met1 to Ala18 are cleaved as a signal peptide. 11 LRR repeats span residues Val60–Arg84, Arg85–Ala108, Leu110–Arg133, Arg134–Arg157, Leu159–His181, Ala182–Arg204, Ser205–Glu228, His229–Arg252, Leu254–Glu276, Leu277–Leu300, and Leu302–Gly324. Asn92 is a glycosylation site (N-linked (GlcNAc...) asparagine). Asn178 carries an N-linked (GlcNAc...) asparagine glycan. Asn295 is a glycosylation site (N-linked (GlcNAc...) asparagine). The LRRCT domain maps to Asp336–Leu387. N-linked (GlcNAc...) asparagine glycosylation is found at Asn388, Asn427, and Asn434.

The protein belongs to the small leucine-rich proteoglycan (SLRP) family. SLRP class IV subfamily. As to expression, expressed in kidney and retina. Also at low levels in brain, testis and muscle. Within the retina, expressed in the inner segment of photoreceptors, outer and inner nuclear layers and the ganglion cell layer.

The protein resides in the secreted. Its subcellular location is the extracellular space. The protein localises to the extracellular matrix. The polypeptide is Nyctalopin (NYX) (Homo sapiens (Human)).